Here is a 309-residue protein sequence, read N- to C-terminus: tRNA dimethylallyltransferase (309 aa).

13-20 serves as a coordination point for ATP; that stretch reads GPTAVGKS. Substrate is bound at residue 15–20; it reads TAVGKS.

It belongs to the IPP transferase family. In terms of assembly, monomer. The cofactor is Mg(2+).

The enzyme catalyses adenosine(37) in tRNA + dimethylallyl diphosphate = N(6)-dimethylallyladenosine(37) in tRNA + diphosphate. Functionally, catalyzes the transfer of a dimethylallyl group onto the adenine at position 37 in tRNAs that read codons beginning with uridine, leading to the formation of N6-(dimethylallyl)adenosine (i(6)A). The protein is tRNA dimethylallyltransferase of Lacticaseibacillus casei (strain BL23) (Lactobacillus casei).